We begin with the raw amino-acid sequence, 191 residues long: Glutathione S-transferase Y-2 (191 aa).

The 79-residue stretch at 2 to 80 (TFATVYIKPH…YIVAKGSKPE (79 aa)) folds into the GST N-terminal domain. In terms of domain architecture, GST C-terminal spans 85 to 191 (TTEERATNTR…VSQHPIIKNM (107 aa)).

This sequence belongs to the GST superfamily.

It catalyses the reaction RX + glutathione = an S-substituted glutathione + a halide anion + H(+). Its function is as follows. Conjugation of reduced glutathione to a wide number of exogenous and endogenous hydrophobic electrophiles. The protein is Glutathione S-transferase Y-2 (GSTY2) of Pichia kudriavzevii (Yeast).